Here is a 388-residue protein sequence, read N- to C-terminus: Succinate--CoA ligase [ADP-forming] subunit beta (388 aa).

One can recognise an ATP-grasp domain in the interval 9–244 (KQLFAEFGLP…PSQEDEREAH (236 aa)). Residues K46, 53–55 (GRG), E99, S102, and E107 contribute to the ATP site. Residues N199 and D213 each coordinate Mg(2+). Substrate contacts are provided by residues N264 and 321 to 323 (GIV).

This sequence belongs to the succinate/malate CoA ligase beta subunit family. Heterotetramer of two alpha and two beta subunits. The cofactor is Mg(2+).

The catalysed reaction is succinate + ATP + CoA = succinyl-CoA + ADP + phosphate. It catalyses the reaction GTP + succinate + CoA = succinyl-CoA + GDP + phosphate. It functions in the pathway carbohydrate metabolism; tricarboxylic acid cycle; succinate from succinyl-CoA (ligase route): step 1/1. Its function is as follows. Succinyl-CoA synthetase functions in the citric acid cycle (TCA), coupling the hydrolysis of succinyl-CoA to the synthesis of either ATP or GTP and thus represents the only step of substrate-level phosphorylation in the TCA. The beta subunit provides nucleotide specificity of the enzyme and binds the substrate succinate, while the binding sites for coenzyme A and phosphate are found in the alpha subunit. The polypeptide is Succinate--CoA ligase [ADP-forming] subunit beta (Aliivibrio fischeri (strain ATCC 700601 / ES114) (Vibrio fischeri)).